The chain runs to 680 residues: MKLATEKKTTRQKLSIAGMLITMGVVYGDIGTSPLYVMKSIVEGNGGIRNISQDFVVGSISLVFWTLMLMTTVKYVLIALRADNNGEGGIFALYTLIRKQAKWLVIPAIIGGATLLADGMLTPAVTVTTAIEGLKGLPINGNVLVSNQREVIILTVTILSVLFFIQKFGTDLIGKSFGPIMLIWFTFIGAIGVMNLMGDLTMLKALNPYYAIHLLFSPENKVGILILGSVFLATTGAEALYSDMGHVGRHNIYGSWPYIAACLVLNYFGQGVWLLQHKEVAAYQNMTDFNPFFEAMPAQLKIPAILLATVAAIIASQALISGSYTLVSEAIKLRLLPRIKVDYPAKLKGQLYISIVNWILWAVCLAVVFYFKNSAHMEAAYGLAITITMLMTTILLFHYLGRREKRWFLAYVVLLFFGAIETIFFIASAAKFMHGGYVTVLIAFVILFIMFVWYRSNSIKESNTFKSSTVSLLAYKRQLHDLRNETSLPLYTTNLVYLSKPQAEPRGKNMVKKNILYSILDKRPKRAQVYWFVAVNVTDEPYTAEYTVDTLGTDYIVSVQLYLGFKMEQKVNIFIRQIIHEMIHNGELPAQPQHYTTIPNREVGDFSFVIIQEDLSPETQIRAMDKVIVQIRLWLEKFTDTPASWFGLEYSDVFVERIPLVLGRQKAINKYHLKRRQEES.

A run of 12 helical transmembrane segments spans residues 16 to 36, 60 to 80, 103 to 123, 150 to 170, 177 to 197, 222 to 242, 255 to 275, 302 to 322, 351 to 371, 380 to 400, 407 to 427, and 432 to 452; these read IAGM…SPLY, ISLV…LIAL, WLVI…MLTP, EVII…KFGT, FGPI…MNLM, VGIL…ALYS, SWPY…VWLL, IPAI…LISG, LYIS…VFYF, AYGL…FHYL, WFLA…FFIA, and FMHG…IMFV.

The protein belongs to the HAK/KUP transporter (TC 2.A.72) family.

The protein resides in the cell membrane. The catalysed reaction is K(+)(in) + H(+)(in) = K(+)(out) + H(+)(out). Its function is as follows. Transport of potassium into the cell. Likely operates as a K(+):H(+) symporter. This Latilactobacillus sakei subsp. sakei (strain 23K) (Lactobacillus sakei subsp. sakei) protein is Probable potassium transport system protein Kup.